The sequence spans 515 residues: MSTKRRKTSDEPSALKKAAAPSAPELKKEKKVKDKSTKDKSSTKKTEKTEKKQDAPEPAEESTPATNSTEEDSVTLDVAPEQEEVETVKKTFKDLGIVDALCEACERLGYKNPTPIQEQSIPLALQNRDIIGIAETGSGKTAAFALPILQALLDKPAPLFALVLAPTRELAAQIAQAFEALGSLISLRCALILGGMDMVTQAIALGKKPHVIVATPGRLLDHLEKTKGFSLRSMQYLVMDEADRLLDMDFGPILEKILKFLPRERRTFLFSATMSSKVESLQRASLRDPLKVSVSSNKYATVSTLKSNYVFIPHMHKDTYLVYLCNEFAGQTIIIFTRTVLETQRIAILLRTLGMGAIPLHGGLSQSARLGALNKFRAGSREILVATDVAARGLDIPNVDCVINHDLPQDSKTYVHRVGRTARAGKSGHAISIVTQYDLEIWLRIEAALGHKLDEYPLEKDEVMVFKPRVEEAQRHARNEMKSLMENQGKHGGLLKRKRGNGQGGGRDHMDAEEG.

Residues 1–85 (MSTKRRKTSD…LDVAPEQEEV (85 aa)) are disordered. The span at 15–24 (LKKAAAPSAP) shows a compositional bias: low complexity. Positions 25 to 55 (ELKKEKKVKDKSTKDKSSTKKTEKTEKKQDA) are enriched in basic and acidic residues. Acidic residues predominate over residues 69–85 (TEEDSVTLDVAPEQEEV). Positions 90-118 (KTFKDLGIVDALCEACERLGYKNPTPIQE) match the Q motif motif. In terms of domain architecture, Helicase ATP-binding spans 121–292 (IPLALQNRDI…RASLRDPLKV (172 aa)). 134–141 (AETGSGKT) provides a ligand contact to ATP. The DEAD box signature appears at 240 to 243 (DEAD). The 149-residue stretch at 316-464 (HKDTYLVYLC…EYPLEKDEVM (149 aa)) folds into the Helicase C-terminal domain. The disordered stretch occupies residues 482 to 515 (KSLMENQGKHGGLLKRKRGNGQGGGRDHMDAEEG). The span at 506-515 (GRDHMDAEEG) shows a compositional bias: basic and acidic residues.

The protein belongs to the DEAD box helicase family. DDX47/RRP3 subfamily.

Its subcellular location is the nucleus. In terms of biological role, required for pre-ribosomal RNA processing. Involved in the maturation of the 35S-pre-rRNA and to its cleavage to mature 18S rRNA. This Neurospora crassa (strain ATCC 24698 / 74-OR23-1A / CBS 708.71 / DSM 1257 / FGSC 987) protein is ATP-dependent rRNA helicase rrp-3 (rrp-3).